The primary structure comprises 487 residues: DNA ligase (487 aa).

Lys-159 functions as the N6-AMP-lysine intermediate in the catalytic mechanism. 3 residues coordinate ATP: Arg-164, Arg-182, and Glu-217. Residue Glu-217 coordinates a divalent metal cation. The segment at 229–237 (EGLDFLFDA) is interaction with the sliding clamp. Glu-344 is an a divalent metal cation binding site. ATP-binding residues include Arg-359 and Lys-365.

It belongs to the ATP-dependent DNA ligase family. Interacts with the sliding clamp. A divalent metal cation is required as a cofactor.

The enzyme catalyses ATP + (deoxyribonucleotide)n-3'-hydroxyl + 5'-phospho-(deoxyribonucleotide)m = (deoxyribonucleotide)n+m + AMP + diphosphate.. Functionally, DNA ligase, which is expressed in the early stage of lytic development, has been implicated in T4 DNA synthesis and genetic recombination. It may also play a role in T4 DNA repair. This chain is DNA ligase (30), found in Escherichia coli (Bacteriophage T6).